Reading from the N-terminus, the 176-residue chain is Transcriptional repressor NrdR (176 aa).

A zinc finger lies at 3–34 (CPFCQHTDSRVLESRSAEAGQSVRRRRECLQC). An ATP-cone domain is found at 49–139 (ITVIKRNQDR…VYRQFRGIRD (91 aa)). A disordered region spans residues 151–176 (GDGPLPSVLDEPYEDTAQPTIMISPQ). Polar residues predominate over residues 167-176 (AQPTIMISPQ).

The protein belongs to the NrdR family. Zn(2+) is required as a cofactor.

Functionally, negatively regulates transcription of bacterial ribonucleotide reductase nrd genes and operons by binding to NrdR-boxes. The protein is Transcriptional repressor NrdR of Acaryochloris marina (strain MBIC 11017).